The primary structure comprises 350 residues: Dihydroorotate dehydrogenase (quinone) (350 aa).

FMN contacts are provided by residues 67–71 and glycine 91; that span reads AGFDK. Position 71 (lysine 71) interacts with substrate. Substrate is bound at residue 116-120; that stretch reads NRMGL. 2 residues coordinate FMN: asparagine 144 and asparagine 177. Residue asparagine 177 participates in substrate binding. Residue cysteine 180 is the Nucleophile of the active site. Substrate is bound at residue asparagine 182. FMN-binding residues include lysine 213 and threonine 241. 242 to 243 is a binding site for substrate; sequence NT. The disordered stretch occupies residues 245–265; sequence TERPASLRSPNAVETGGLSGK. Residues glycine 264, glycine 291, and 312–313 contribute to the FMN site; that span reads YT.

Belongs to the dihydroorotate dehydrogenase family. Type 2 subfamily. Monomer. FMN is required as a cofactor.

It is found in the cell membrane. It catalyses the reaction (S)-dihydroorotate + a quinone = orotate + a quinol. The protein operates within pyrimidine metabolism; UMP biosynthesis via de novo pathway; orotate from (S)-dihydroorotate (quinone route): step 1/1. Its function is as follows. Catalyzes the conversion of dihydroorotate to orotate with quinone as electron acceptor. The polypeptide is Dihydroorotate dehydrogenase (quinone) (pyrD) (Haloarcula marismortui (strain ATCC 43049 / DSM 3752 / JCM 8966 / VKM B-1809) (Halobacterium marismortui)).